Reading from the N-terminus, the 118-residue chain is UPF0102 protein STH1475 (118 aa).

Belongs to the UPF0102 family.

The chain is UPF0102 protein STH1475 from Symbiobacterium thermophilum (strain DSM 24528 / JCM 14929 / IAM 14863 / T).